The chain runs to 152 residues: Fibroblast growth factor 1 (152 aa).

N-acetylalanine is present on Ala2. The propeptide occupies 2 to 15 (AEGEITTFTALTEK). Heparin is bound at residue Asn33. The interval 127–143 (KKNGSCKRGPRTHYGQK) is heparin-binding.

Belongs to the heparin-binding growth factors family. As to quaternary structure, monomer. Homodimer. Interacts with FGFR1, FGFR2, FGFR3 and FGFR4. Affinity between fibroblast growth factors (FGFs) and their receptors is increased by heparan sulfate glycosaminoglycans that function as coreceptors. Found in a complex with FGFBP1, FGF1 and FGF2. Interacts with FGFBP1. Part of a Cu(2+)-dependent multiprotein aggregate containing FGF1, S100A13 and SYT1. Interacts with SYT1. Interacts with S100A13. Interacts with LRRC59. Interacts with CSNKA, CSNKB and FIBP. While binding with LRRC59, CSNKA and FIBP seem mutually exclusive, CSNKB and FIBP may cooperatively interact with FGF1. Forms a ternary complex with FGFR1 and ITGAV:ITGB3 and induces the recruitment of PTPN11 to the complex. In terms of processing, in the nucleus, phosphorylated by PKC/PRKCD.

It is found in the secreted. Its subcellular location is the cytoplasm. The protein localises to the cell cortex. The protein resides in the cytosol. It localises to the nucleus. Plays an important role in the regulation of cell survival, cell division, angiogenesis, cell differentiation and cell migration. Functions as a potent mitogen in vitro. Acts as a ligand for FGFR1 and integrins. Binds to FGFR1 in the presence of heparin leading to FGFR1 dimerization and activation via sequential autophosphorylation on tyrosine residues which act as docking sites for interacting proteins, leading to the activation of several signaling cascades. Binds to integrin ITGAV:ITGB3. Its binding to integrin, subsequent ternary complex formation with integrin and FGFR1, and the recruitment of PTPN11 to the complex are essential for FGF1 signaling. Induces the phosphorylation and activation of FGFR1, FRS2, MAPK3/ERK1, MAPK1/ERK2 and AKT1. Can induce angiogenesis. This is Fibroblast growth factor 1 (FGF1) from Sus scrofa (Pig).